Reading from the N-terminus, the 72-residue chain is Translation initiation factor IF-1 (72 aa).

Residues 1 to 72 enclose the S1-like domain; it reads MAKEDVIEMQ…SKGRIVFRAR (72 aa).

It belongs to the IF-1 family. Component of the 30S ribosomal translation pre-initiation complex which assembles on the 30S ribosome in the order IF-2 and IF-3, IF-1 and N-formylmethionyl-tRNA(fMet); mRNA recruitment can occur at any time during PIC assembly.

Its subcellular location is the cytoplasm. Its function is as follows. One of the essential components for the initiation of protein synthesis. Stabilizes the binding of IF-2 and IF-3 on the 30S subunit to which N-formylmethionyl-tRNA(fMet) subsequently binds. Helps modulate mRNA selection, yielding the 30S pre-initiation complex (PIC). Upon addition of the 50S ribosomal subunit IF-1, IF-2 and IF-3 are released leaving the mature 70S translation initiation complex. The protein is Translation initiation factor IF-1 of Pseudoalteromonas translucida (strain TAC 125).